We begin with the raw amino-acid sequence, 283 residues long: Phospholipase C (283 aa).

An N-terminal signal peptide occupies residues 1–24 (MKKKVLALAAAITVVAPLQSVAFA). A propeptide spanning residues 25-38 (HENDGGSKIKIVHR) is cleaved from the precursor. Zn(2+) contacts are provided by tryptophan 39, histidine 52, aspartate 93, histidine 107, histidine 156, aspartate 160, histidine 166, histidine 180, and glutamate 184. Residues 39 to 283 (WSAEDKHKEG…QLWFDTYGDR (245 aa)) enclose the Zn-dependent PLC domain.

This sequence belongs to the bacterial zinc-metallophospholipase C family. In terms of assembly, monomer. Requires Zn(2+) as cofactor.

The catalysed reaction is a 1,2-diacyl-sn-glycero-3-phosphocholine + H2O = phosphocholine + a 1,2-diacyl-sn-glycerol + H(+). Functionally, required, with sphingomyelinase, to effect target cell lysis (hemolysis). In Bacillus cereus, this protein is Phospholipase C (plc).